A 499-amino-acid chain; its full sequence is Glutamate--tRNA ligase (499 aa).

The 'HIGH' region signature appears at 12-22 (PSPTGHLHIGN). Positions 259–263 (KLSKR) match the 'KMSKS' region motif. Lys262 contributes to the ATP binding site.

The protein belongs to the class-I aminoacyl-tRNA synthetase family. Glutamate--tRNA ligase type 1 subfamily. Monomer.

The protein resides in the cytoplasm. The enzyme catalyses tRNA(Glu) + L-glutamate + ATP = L-glutamyl-tRNA(Glu) + AMP + diphosphate. Catalyzes the attachment of glutamate to tRNA(Glu) in a two-step reaction: glutamate is first activated by ATP to form Glu-AMP and then transferred to the acceptor end of tRNA(Glu). This Lactobacillus johnsonii (strain CNCM I-12250 / La1 / NCC 533) protein is Glutamate--tRNA ligase.